We begin with the raw amino-acid sequence, 132 residues long: Small ribosomal subunit protein uS8 (132 aa).

Part of the 30S ribosomal subunit. Contacts proteins S5 and S12. In terms of processing, a modified and unmodified form exist; the nature of the modification(s) is unknown.

Functionally, one of the primary rRNA binding proteins, it binds directly to 16S rRNA central domain where it helps coordinate assembly of the platform of the 30S subunit. The chain is Small ribosomal subunit protein uS8 from Rhodopseudomonas palustris (strain ATCC BAA-98 / CGA009).